The chain runs to 243 residues: UPF0246 protein SpyM3_1790 (243 aa).

Belongs to the UPF0246 family.

The protein is UPF0246 protein SpyM3_1790 of Streptococcus pyogenes serotype M3 (strain ATCC BAA-595 / MGAS315).